Here is a 217-residue protein sequence, read N- to C-terminus: Probable GTP-binding protein EngB (217 aa).

The EngB-type G domain maps to 29–213 (GPSEVAFAGR…RQAIAQTVGI (185 aa)). GTP-binding positions include 37 to 44 (GRSNVGKS), 64 to 68 (GRTQE), 91 to 94 (DMPG), 158 to 161 (TKTD), and 192 to 194 (TSS). Mg(2+) is bound by residues Ser44 and Thr66.

It belongs to the TRAFAC class TrmE-Era-EngA-EngB-Septin-like GTPase superfamily. EngB GTPase family. Mg(2+) is required as a cofactor.

Necessary for normal cell division and for the maintenance of normal septation. In Rhizobium etli (strain CIAT 652), this protein is Probable GTP-binding protein EngB.